A 600-amino-acid polypeptide reads, in one-letter code: DNA mismatch repair protein MutL (600 aa).

Positions 348–375 (QPQAQRPQTAWSAETSPFRPYQPTTGFS) are disordered. Residues 349–362 (PQAQRPQTAWSAET) are compositionally biased toward polar residues.

Belongs to the DNA mismatch repair MutL/HexB family.

Its function is as follows. This protein is involved in the repair of mismatches in DNA. It is required for dam-dependent methyl-directed DNA mismatch repair. May act as a 'molecular matchmaker', a protein that promotes the formation of a stable complex between two or more DNA-binding proteins in an ATP-dependent manner without itself being part of a final effector complex. This is DNA mismatch repair protein MutL from Rhizobium leguminosarum bv. trifolii (strain WSM2304).